The chain runs to 168 residues: MSVMASDKACAPVRASRPFPKQKLRELVLQALYALEIDPEGEDSLVSLLMTEASVSKKNAAYALMFCRAIRANQPDLDALLDATIRTTTLARLTIIERNILRMMLFEHQQNQDCCPVPVAILIAETTRLIKKFSYSEGSSLILAVLGSIFDHPAPALDAPLEPTSMCG.

It belongs to the NusB family.

In terms of biological role, involved in transcription antitermination. Required for transcription of ribosomal RNA (rRNA) genes. Binds specifically to the boxA antiterminator sequence of the ribosomal RNA (rrn) operons. The protein is Transcription antitermination protein NusB of Chlamydia trachomatis serovar A (strain ATCC VR-571B / DSM 19440 / HAR-13).